The chain runs to 407 residues: Deacetylase Atu3266 (407 aa).

6 residues coordinate Zn(2+): H75, H77, K173, H206, H229, and D289. At K173 the chain carries N6-carboxylysine.

Belongs to the metallo-dependent hydrolases superfamily. Atu3266/EF_0837 deacetylase family. In terms of assembly, homohexamer, dimer of trimers. It depends on Zn(2+) as a cofactor.

Esterase that catalyzes the deacetylation of acetyl-(R)-mandelate (in vitro). Can also hydrolyze acetyl glycolate, but with lower efficiency. Has very low N-acetyl-D-amino acid deacetylase activity with N-acetyl-D-serine and N-acetyl-D-threonine (in vitro). Theoretical substrate docking studies suggest that other N-acetylated amino acids may optimally occupy the active site and may in fact be the physiological substrates. This Agrobacterium fabrum (strain C58 / ATCC 33970) (Agrobacterium tumefaciens (strain C58)) protein is Deacetylase Atu3266.